Reading from the N-terminus, the 95-residue chain is Protein TusB (95 aa).

The protein belongs to the DsrH/TusB family. As to quaternary structure, heterohexamer, formed by a dimer of trimers. The hexameric TusBCD complex contains 2 copies each of TusB, TusC and TusD. The TusBCD complex interacts with TusE.

Its subcellular location is the cytoplasm. Part of a sulfur-relay system required for 2-thiolation of 5-methylaminomethyl-2-thiouridine (mnm(5)s(2)U) at tRNA wobble positions. The chain is Protein TusB from Klebsiella pneumoniae (strain 342).